The following is a 367-amino-acid chain: 3-dehydroquinate synthase (367 aa).

Residues 69-74 (DGESHK), 103-107 (GVIGD), 127-128 (TT), Lys-140, Lys-149, and 167-170 (TLAT) each bind NAD(+). Zn(2+) contacts are provided by Glu-182, His-245, and His-262.

It belongs to the sugar phosphate cyclases superfamily. Dehydroquinate synthase family. Requires Co(2+) as cofactor. Zn(2+) serves as cofactor. It depends on NAD(+) as a cofactor.

The protein resides in the cytoplasm. It carries out the reaction 7-phospho-2-dehydro-3-deoxy-D-arabino-heptonate = 3-dehydroquinate + phosphate. Its pathway is metabolic intermediate biosynthesis; chorismate biosynthesis; chorismate from D-erythrose 4-phosphate and phosphoenolpyruvate: step 2/7. Catalyzes the conversion of 3-deoxy-D-arabino-heptulosonate 7-phosphate (DAHP) to dehydroquinate (DHQ). The chain is 3-dehydroquinate synthase from Stutzerimonas stutzeri (strain A1501) (Pseudomonas stutzeri).